A 272-amino-acid chain; its full sequence is 3',5'-cyclic adenosine monophosphate phosphodiesterase CpdA (272 aa).

Fe cation-binding residues include Asp-21, His-23, Asp-63, Asn-93, His-161, His-200, and His-202. Residues His-23, Asp-63, and 93–94 contribute to the AMP site; that span reads NH. Position 202 (His-202) interacts with AMP.

The protein belongs to the cyclic nucleotide phosphodiesterase class-III family. In terms of assembly, monomer. The cofactor is a divalent metal cation.

The catalysed reaction is 3',5'-cyclic AMP + H2O = AMP + H(+). Its activity is regulated as follows. Activated by iron. Other divalent metal ions have no effect. Hydrolyzes cAMP to 5'-AMP. Plays an important regulatory role in modulating the intracellular concentration of cAMP, thereby influencing cAMP-dependent processes. Specifically required for regulation of virulence factors. Can also hydrolyze cGMP, but cGMP is unlikely to be synthesized by P.aeruginosa and cAMP is probably the biologically relevant substrate for CpdA in vivo. The chain is 3',5'-cyclic adenosine monophosphate phosphodiesterase CpdA from Pseudomonas aeruginosa.